Consider the following 727-residue polypeptide: Polyphosphate kinase (727 aa).

Asn-82 lines the ATP pocket. Positions 412 and 442 each coordinate Mg(2+). His-472 (phosphohistidine intermediate) is an active-site residue. The ATP site is built by Tyr-505, Arg-601, and His-629.

It belongs to the polyphosphate kinase 1 (PPK1) family. The cofactor is Mg(2+). In terms of processing, an intermediate of this reaction is the autophosphorylated ppk in which a phosphate is covalently linked to a histidine residue through a N-P bond.

The catalysed reaction is [phosphate](n) + ATP = [phosphate](n+1) + ADP. Catalyzes the reversible transfer of the terminal phosphate of ATP to form a long-chain polyphosphate (polyP). This Pseudomonas putida (strain ATCC 47054 / DSM 6125 / CFBP 8728 / NCIMB 11950 / KT2440) protein is Polyphosphate kinase.